Reading from the N-terminus, the 31-residue chain is Photosystem II reaction center protein T (31 aa).

A helical transmembrane segment spans residues 3–23 (SVAYIIVLAMALSVLFFAIAF).

This sequence belongs to the PsbT family. As to quaternary structure, PSII is composed of 1 copy each of membrane proteins PsbA, PsbB, PsbC, PsbD, PsbE, PsbF, PsbH, PsbI, PsbJ, PsbK, PsbL, PsbM, PsbT, PsbX, PsbY, PsbZ, Psb30/Ycf12, peripheral proteins PsbO, CyanoQ (PsbQ), PsbU, PsbV and a large number of cofactors. It forms dimeric complexes.

It localises to the cellular thylakoid membrane. Its function is as follows. Found at the monomer-monomer interface of the photosystem II (PS II) dimer, plays a role in assembly and dimerization of PSII. PSII is a light-driven water plastoquinone oxidoreductase, using light energy to abstract electrons from H(2)O, generating a proton gradient subsequently used for ATP formation. This Picosynechococcus sp. (strain ATCC 27264 / PCC 7002 / PR-6) (Agmenellum quadruplicatum) protein is Photosystem II reaction center protein T.